Reading from the N-terminus, the 139-residue chain is Glutamate mutase sigma subunit (139 aa).

In terms of domain architecture, B12-binding spans 4–139; it reads KIKLVLGVIG…DLHADFPDHA (136 aa). Adenosylcob(III)alamin is bound by residues 14-18, His-17, 62-64, and 94-98; these read SDCHA, SSL, and NIVVG.

The protein belongs to the methylaspartate mutase GlmS subunit family. In terms of assembly, heterotetramer composed of 2 epsilon subunits (GlmE) and 2 sigma subunits (GlmS). GlmE exists as a homodimer and GlmS as a monomer. Adenosylcob(III)alamin serves as cofactor.

It carries out the reaction (2S,3S)-3-methyl-L-aspartate = L-glutamate. Its pathway is amino-acid degradation; L-glutamate degradation via mesaconate pathway; acetate and pyruvate from L-glutamate: step 1/4. Functionally, catalyzes the carbon skeleton rearrangement of L-glutamate to L-threo-3-methylaspartate ((2S,3S)-3-methylaspartate). The sequence is that of Glutamate mutase sigma subunit from Treponema denticola (strain ATCC 35405 / DSM 14222 / CIP 103919 / JCM 8153 / KCTC 15104).